The primary structure comprises 526 residues: Cytochrome P450 monooxygenase BOT4 (526 aa).

N-linked (GlcNAc...) asparagine glycosylation is present at asparagine 5. The chain crosses the membrane as a helical span at residues 41–61 (CLVAIILCRFIAVWSYNLWFH). 2 N-linked (GlcNAc...) asparagine glycosylation sites follow: asparagine 205 and asparagine 281. Cysteine 464 lines the heme pocket.

This sequence belongs to the cytochrome P450 family. The cofactor is heme.

The protein resides in the membrane. Its pathway is secondary metabolite biosynthesis. Cytochrome P450 monooxygenase; part of the gene cluster that mediates the biosynthesis of botrydial. Botrydial is necessary for colonization of plant tissue by the T4 strain. It is a strain-dependent virulence factor since highly aggressive strains like SAS56 or B05 still retain substantial virulence when botrydial synthesis is impaired, since they produce also botcinic acid. The first step of botrydial biosynthesis is performed by the sesquiterpene synthase BOT2 which catalyzes the cyclization of farnesyl diphosphate (FPP) to presilphiperfolan-8-beta-ol (PSP). The cytochrome P450 monooxygenase BOT4 then catalyzes the hydroxylation at C-4 to give a probotryane intermediate. Acetylation of the hydroxyl at C-4 is carried out by the acetyltransferase BOT5, followed by the combined action of the P450 monooxygenases BOT3 and BOT1, to yield finally the glycol, via the regio- and stereospecific hydroxylations at C-10 and C-15 of the probotryane intermediates, respectively. The cleavage of the C10-C15 bond of probotryane skeleton is an intriguing and chemically important reaction, which could be mediated by some of the monooxygenases or by a combination of them. It is possible that either BOT3 or BOT1 would oxidize either the 10- or the 15-hydroxy group to the hydroperoxide derivative, which would then undergo heterolytic fragmentation to give the dialdehyde botrydial. Finally, the dehydrogenase BOT7 might be involved in the conversion of botrydial to dihydrobotrydial. The protein is Cytochrome P450 monooxygenase BOT4 of Botryotinia fuckeliana (Noble rot fungus).